Here is a 272-residue protein sequence, read N- to C-terminus: MAPITQETVDGLKDIIHKLESRVADLESRLVHGSPASNSKSLAEQFRIILIGPPGAGKGTQAPRLKEKYCVCHLATGDMLRSQVAKKTPLGKEAKKIMDQGGLVSDEIMVNMIKSELETNSECKNGFILDGFPRTVAQAERLDDMLSARNEKLQHAVELQIDDALLVARITGRLVHPASGRSYHKIFNPPKQDMKDDITGEPLIQRSDDNAATLEKRLATYHAQTSPVVDYYKKTGIWCGIDASQEPGQVWKSLLGVFQPSSSILSKVGLSK.

55-60 provides a ligand contact to ATP; it reads GAGKGT. Positions 75 to 104 are NMP; that stretch reads ATGDMLRSQVAKKTPLGKEAKKIMDQGGLV. AMP contacts are provided by residues threonine 76, arginine 81, 102 to 104, 131 to 134, and glutamine 138; these read GLV and GFPR. Residues 172–209 form an LID region; the sequence is GRLVHPASGRSYHKIFNPPKQDMKDDITGEPLIQRSDD. ATP contacts are provided by residues arginine 173 and 182 to 183; that span reads SY. AMP-binding residues include arginine 206 and arginine 217. Position 245 (glutamine 245) interacts with ATP.

This sequence belongs to the adenylate kinase family. AK2 subfamily. Monomer.

The protein localises to the cytoplasm. Its subcellular location is the cytosol. The protein resides in the mitochondrion intermembrane space. The enzyme catalyses AMP + ATP = 2 ADP. Its function is as follows. Catalyzes the reversible transfer of the terminal phosphate group between ATP and AMP. Plays an important role in cellular energy homeostasis and in adenine nucleotide metabolism. Adenylate kinase activity is critical for regulation of the phosphate utilization and the AMP de novo biosynthesis pathways. This is Adenylate kinase (adk1) from Talaromyces marneffei (Penicillium marneffei).